The sequence spans 311 residues: Catechol 1,2-dioxygenase (311 aa).

Y164 contacts catechol. Fe cation-binding residues include Y164, Y200, H224, and H226. 224–226 is a binding site for catechol; it reads HIH.

This sequence belongs to the intradiol ring-cleavage dioxygenase family. As to quaternary structure, homodimer. The cofactor is Fe(3+).

It carries out the reaction catechol + O2 = cis,cis-muconate + 2 H(+). The protein operates within aromatic compound metabolism; beta-ketoadipate pathway; 5-oxo-4,5-dihydro-2-furylacetate from catechol: step 1/3. This chain is Catechol 1,2-dioxygenase, found in Acinetobacter baylyi (strain ATCC 33305 / BD413 / ADP1).